Consider the following 360-residue polypeptide: MEHVVTCWRLKLLSWPVFLIWICLSLASVSLISWDQLPAFLIPSTGDSSLQTAKSRDSMKAPGRLLLLTLCILTFSAVCVFLCCWACLPLCLATCLDRHLPAAPRSTVPGPLHFSGYSSVPDGKPLIRELCHSCAVVSNSGQMLGSGLGAQIDGAECVLRMNQAPTVGFEEDVGQRTTLRVISHTSVPLLLRNYSHYFQHARDTLYVVWGQGRHMDRVLGGRTYRTLLQLTRMYPGLQVYTFTERMMAYCDQIFQDETGKNRRQSGSFLSTGWFTMIPALELCEEIVVYGMVSDSYCSEKSPRSVPYHYFEKGRLDECQMYRLHEQAPRSAHRFITEKAVFSRWAKKRPIVFAHPSWRAK.

Residues 1–71 (MEHVVTCWRL…PGRLLLLTLC (71 aa)) are Cytoplasmic-facing. Residues 72 to 94 (ILTFSAVCVFLCCWACLPLCLAT) traverse the membrane as a helical; Signal-anchor for type II membrane protein segment. The Lumenal portion of the chain corresponds to 95-360 (CLDRHLPAAP…VFAHPSWRAK (266 aa)). Cysteine 134 and cysteine 283 are disulfide-bonded. Asparagine 193 carries an N-linked (GlcNAc...) asparagine glycan.

This sequence belongs to the glycosyltransferase 29 family. High expression in brain and colon and to a lesser extent in lung, heart, kidney, spleen and thymus.

It is found in the golgi apparatus membrane. The catalysed reaction is an alpha-Neu5Ac-(2-&gt;3)-beta-D-Gal-(1-&gt;3)-D-GlcNAc derivative + CMP-N-acetyl-beta-neuraminate = an alpha-Neu5Ac-(2-&gt;3)-beta-D-Gal-(1-&gt;3)-[alpha-Neu5Ac-(2-&gt;6)]-D-GlcNAc derivative + CMP + H(+). The enzyme catalyses N-acetyl-alpha-neuraminosyl-(2-&gt;3)-beta-D-galactosyl-(1-&gt;3)-N-acetyl-D-galactosamine + CMP-N-acetyl-beta-neuraminate = N-acetyl-alpha-neuraminosyl-(2-&gt;3)-beta-D-galactosyl-(1-&gt;3)-[N-acetyl-alpha-neuraminosyl-(2-&gt;6)]-N-acetyl-D-galactosamine + CMP + H(+). It carries out the reaction a ganglioside GM1b (d18:1(4E)) + CMP-N-acetyl-beta-neuraminate = a ganglioside GD1alpha (d18:1(4E)) + CMP + H(+). It catalyses the reaction 3-O-[alpha-Neu5Ac-(2-&gt;3)-beta-D-Gal-(1-&gt;3)-alpha-D-GalNAc]-L-Ser-[protein] + CMP-N-acetyl-beta-neuraminate = a 3-O-{alpha-Neu5Ac-(2-&gt;3)-beta-D-Gal-(1-&gt;3)-[alpha-Neu5Ac-(2-&gt;6)]-alpha-D-GalNAc}-L-seryl-[protein] + CMP + H(+). The catalysed reaction is 3-O-[alpha-Neu5Ac-(2-&gt;3)-beta-D-Gal-(1-&gt;3)-alpha-D-GalNAc]-L-Thr-[protein] + CMP-N-acetyl-beta-neuraminate = a 3-O-{alpha-Neu5Ac-(2-&gt;3)-beta-D-Gal-(1-&gt;3)-[alpha-Neu5Ac-(2-&gt;6)]-alpha-D-GalNAc}-L-threonyl-[protein] + CMP + H(+). It participates in protein modification; protein glycosylation. Its pathway is glycolipid biosynthesis. Its function is as follows. Transfers the sialyl group (N-acetyl-alpha-neuraminyl or NeuAc) from CMP-NeuAc to the GalNAc residue on the NeuAc-alpha-2,3-Gal-beta-1,3-GalNAc sequence of glycoproteins and glycolipids forming an alpha-2,6-linkage. Produces branched type disialyl structures by transfer of a sialyl group onto a GalNAc residue inside the backbone core chains. Prefers O-glycans to glycoproteins or glycolipids. This Mus musculus (Mouse) protein is Alpha-N-acetyl-neuraminyl-2,3-beta-galactosyl-1,3-N-acetyl-galactosaminide alpha-2,6-sialyltransferase (St6galnac4).